The primary structure comprises 543 residues: T-complex protein 1 subunit gamma (543 aa).

It belongs to the TCP-1 chaperonin family.

The protein localises to the cytoplasm. Molecular chaperone; assists the folding of proteins upon ATP hydrolysis. Known to play a role, in vitro, in the folding of actin and tubulin. Plays a role in microtubule polymerization. In Caenorhabditis elegans, this protein is T-complex protein 1 subunit gamma.